A 1286-amino-acid polypeptide reads, in one-letter code: ABC transporter B family member 1 (1286 aa).

The next 2 helical transmembrane spans lie at 42–62 and 93–113; these read VLMGIGSVGAFVHGCSLPLFL and FLVVGAAIWASSWAEISCWMW. The region spanning 44–333 is the ABC transmembrane type-1 1 domain; that stretch reads MGIGSVGAFV…SAPSMAAFAK (290 aa). D139 provides a ligand contact to ATP. 2 consecutive transmembrane segments (helical) span residues 166 to 186 and 187 to 207; these read LGNFIHYMATFVSGFIVGFTA and VWQLALVTLAVVPLIAVIGGI. N217 carries an N-linked (GlcNAc...) asparagine glycan. Transmembrane regions (helical) follow at residues 277–297 and 301–321; these read ATYFVVFCCYALLLWYGGYLV and LTNGGLAIATMFAVMIGGLAL. Y286 contributes to the brassinolide binding site. Residues 368–604 form the ABC transporter 1 domain; that stretch reads VELKNVDFSY…GENGVYAKLI (237 aa). The ATP site is built by Y377, S379, R380, G408, K409, S410, and T411. Positions 614–647 are disordered; sequence AMSNARKSSARPSSARNSVSSPIMTRNSSYGRSP. Low complexity predominate over residues 616–635; sequence SNARKSSARPSSARNSVSSP. Residue N640 is glycosylated (N-linked (GlcNAc...) asparagine). The 289-residue stretch at 700–988 folds into the ABC transmembrane type-1 2 domain; that stretch reads ALLGSVGSVI…TLTLAPDFIK (289 aa). 2 consecutive transmembrane segments (helical) span residues 705 to 725 and 745 to 765; these read VGSVICGSLSAFFAYVLSAVL and YLLIGLSSAALVFNTLQHSFW. N771 carries N-linked (GlcNAc...) asparagine glycosylation. D793 is an ATP binding site. N797 is a glycosylation site (N-linked (GlcNAc...) asparagine). The next 4 membrane-spanning stretches (helical) occupy residues 821–843, 845–867, 932–952, and 967–987; these read ISVIVQNTALMLVACTAGFVLQW, LALVLVAVFPVVVAATVLQKMFM, VAQFCLYASYALGLWYASWLV, and MVLMVSANGAAETLTLAPDFI. Residues Y941 and E978 each contribute to the brassinolide site. Residues 1024-1260 enclose the ABC transporter 2 domain; the sequence is VELKHIDFSY…HPDGIYARMI (237 aa). ATP contacts are provided by Y1033, R1036, G1064, K1065, and S1066. An interaction with FKBP42/TWD1 region spans residues 1049–1286; it reads ARAGKTLALV…SSSRVKEDDA (238 aa).

It belongs to the ABC transporter superfamily. ABCB family. Multidrug resistance exporter (TC 3.A.1.201) subfamily. In terms of assembly, interacts with 1-naphthylphthalamic acid (NPA) and FKBP42/TWD1. In terms of tissue distribution, ubiquitous, with high levels in peduncles. Mostly localized in young developing tissues, including meristems, as well as root and shoot apices.

It is found in the cell membrane. It carries out the reaction (indol-3-yl)acetate(in) + ATP + H2O = (indol-3-yl)acetate(out) + ADP + phosphate + H(+). The enzyme catalyses brassinolide(in) + ATP + H2O = brassinolide(out) + ADP + phosphate + H(+). The catalysed reaction is 24-epi-brassinolide(in) + ATP + H2O = 24-epi-brassinolide(out) + ADP + phosphate + H(+). It catalyses the reaction 24-epi-castasterone(in) + ATP + H2O = 24-epi-castasterone(out) + ADP + phosphate + H(+). It carries out the reaction castasterone(in) + ATP + H2O = castasterone(out) + ADP + phosphate + H(+). With respect to regulation, transport capacity is stimulated by the chaperone protein FKBP42/TWD1. Transport activity inhibited by 1-N-naphthylphthalamic acid (NPA), cyclopropyl propane dione (CPD), cyclosporin A, verapamil and quercetin. ATPase activity is specifically activated by bioactive brassinosteroids in a dose-dependent manner, including brassinolide (BL), 24-epiBL, 24-epicastasterone (24-epiCS) and castasterone-alkyne; BL binding leads to structural changes. Inhibited by vanadate. Functionally, brassinosteroid exporter that, in conjunction with ABCB19, supports the accumulation of exogenous brassinosteroids (BR) in the apoplast, thus promoting BR signaling initiation involving the specific receptor BRI1 and required for plant growth and stress responses. Auxin efflux transporter that acts as a negative regulator of light signaling to promote hypocotyl elongation. May contribute to the regulation of leaf position and morphology during PHOT1-mediated blue light responses involving auxin distribution, especially in low light fluence. Together with ABCB19 and in a FKBP42/TWD1-dependent manner, supports seed development by promoting stamen elongation and, to a lesser extent, anther dehiscence and pollen maturation, probably as auxin transporters. Mediates the accumulation of chlorophyll and anthocyanin, as well as the expression of genes in response to light. Participates directly in auxin efflux and thus regulates the polar (presumably basipetal) auxin transport (from root tips to root elongating zone). Also transports some auxin metabolites such as oxindoleacetic acid and indoleacetaldehyde. Involved in diverse auxin-mediated responses including gravitropism, phototropism and lateral root formation. Confers resistance to herbicides such as dicamba, pendimethalin, oryzalin, and monosodium acid methanearsonate (MSMA), but not to herbicides such as glyphosate, atrazine, bentazon and fluazifop-p-butyl. Also mediates resistance to xenobiotics such as cycloheximide and the cytokinin N6-(2-isopentenyl)adenine (2IP). The protein is ABC transporter B family member 1 of Arabidopsis thaliana (Mouse-ear cress).